The chain runs to 210 residues: uncharacterized protein (210 aa).

This is an uncharacterized protein from Treponema pallidum (strain Nichols).